The following is a 259-amino-acid chain: Flap endonuclease Xni (259 aa).

Mg(2+) is bound at residue aspartate 109. In terms of domain architecture, 5'-3' exonuclease spans 165 to 255; sequence VKPQQLSDYW…FNLQDLRFTA (91 aa). K(+) is bound by residues leucine 176, isoleucine 187, and isoleucine 190. Residues 189-194 form an interaction with DNA region; it reads GIGPKA.

Belongs to the Xni family. Mg(2+) serves as cofactor. K(+) is required as a cofactor.

Has flap endonuclease activity. During DNA replication, flap endonucleases cleave the 5'-overhanging flap structure that is generated by displacement synthesis when DNA polymerase encounters the 5'-end of a downstream Okazaki fragment. The polypeptide is Flap endonuclease Xni (Vibrio vulnificus (strain CMCP6)).